The sequence spans 121 residues: Small ribosomal subunit protein uS11c (121 aa).

The protein belongs to the universal ribosomal protein uS11 family. As to quaternary structure, part of the 30S ribosomal subunit.

Its subcellular location is the plastid. It localises to the chloroplast. In Cyanidioschyzon merolae (strain NIES-3377 / 10D) (Unicellular red alga), this protein is Small ribosomal subunit protein uS11c.